The primary structure comprises 484 residues: Membrane-bound lytic murein transglycosylase F (484 aa).

The first 18 residues, 1–18, serve as a signal peptide directing secretion; it reads MKGLLLRIIAAFALVLWA. The tract at residues 19 to 267 is non-LT domain; sequence IDMVFPWQQM…RIEEKYFNHF (249 aa). The tract at residues 268 to 484 is LT domain; the sequence is SQFDYVDMRQ…PLTDNQEKQE (217 aa). Residue Glu312 is part of the active site. The segment at 459 to 484 is disordered; it reads ADNKDKPSETDENLPLPLTDNQEKQE.

The protein in the N-terminal section; belongs to the bacterial solute-binding protein 3 family. It in the C-terminal section; belongs to the transglycosylase Slt family.

It localises to the cell outer membrane. It catalyses the reaction Exolytic cleavage of the (1-&gt;4)-beta-glycosidic linkage between N-acetylmuramic acid (MurNAc) and N-acetylglucosamine (GlcNAc) residues in peptidoglycan, from either the reducing or the non-reducing ends of the peptidoglycan chains, with concomitant formation of a 1,6-anhydrobond in the MurNAc residue.. Functionally, murein-degrading enzyme that degrades murein glycan strands and insoluble, high-molecular weight murein sacculi, with the concomitant formation of a 1,6-anhydromuramoyl product. Lytic transglycosylases (LTs) play an integral role in the metabolism of the peptidoglycan (PG) sacculus. Their lytic action creates space within the PG sacculus to allow for its expansion as well as for the insertion of various structures such as secretion systems and flagella. The sequence is that of Membrane-bound lytic murein transglycosylase F from Mannheimia succiniciproducens (strain KCTC 0769BP / MBEL55E).